We begin with the raw amino-acid sequence, 939 residues long: MNEDQFPKAYDPKSSESGVYSFWERSGMFIADANSKKPAYSIVMPPPNVTGILHMGHALVNTLQDMLIRYKRMKGFEVCWVPGTDHAGIATQTVVERHLRSSLGKRRTDFSREEFLKHVWEWKEKSQNVILSQLRQLGCSCDWSRQRFTMDPEANRAVKKAFKVLFDKGVIYRGYYLVNWDPILQTALADDEVEYEEREGWLYYIRYPVVNSEEFITVATTRPETLLGDTAIAVSPEDERYSHLIGAKVIVPFVDREIPIIGDFSVDASFGTGAVKITPAHDKDDYRTGMNHRLPMINILTPTGEINENGGIFTGLAKESARENIITSLEALGLFVRKEAYSSRVGVSYRSGAIIEPYLSKQWFVSVDSFRESLREFVNSKEINLFPPEFIRNYLTWVNNLKDWCISRQLWWGHRIPVWHNKHDEEYVICFDGDGVPEEVAQDPESWYQDPDVLDTWFSSGLWPLTCFGWPEESADLRKFYPTSVLVTGHDILFFWVTRMVLMCSAMVDTKPFADVFLHGLIFGKSYKQYDDNGEWTYVSGDQKREYDKGKALPKNVVAKWEKLSKSKGNVIDPIEMIDMYGADAVRFTLCSCANRGEQIDLDYRLFEEYKNFVNKLWNGARFIFGHISELTSRDLEEGVNKDLLGLEDFYILDRFNELLALIDSHYNCYSFDKIAALAYDFFKNDLCSTYLEIIKPTLFGKQGNDEQRATKRKLLATLLVNILGVLHPIVPYITETLFQKIKTTLGVVGDGLGDAVTGHAVSMLRSEACMIAGYPQPIELSFPQGLRESFAIAEKLVYTIRNIRGEMQLDPRDLLQAFIISSEKKELLDACIPIMCALGGIKTIEQLSEAPKDCIFSLGVVEGIQVGVILPAEHLAKEHARLEKEKIRLENSIESLSKLLASEDFRTRANPNLVQAKEDALRNSRQELQSILDKIASL.

The 'HIGH' region motif lies at P47–H57. The 'KMSKS' region signature appears at K563–S567. K566 provides a ligand contact to ATP. A coiled-coil region spans residues A873 to L939.

This sequence belongs to the class-I aminoacyl-tRNA synthetase family. ValS type 1 subfamily. As to quaternary structure, monomer.

It localises to the cytoplasm. The enzyme catalyses tRNA(Val) + L-valine + ATP = L-valyl-tRNA(Val) + AMP + diphosphate. In terms of biological role, catalyzes the attachment of valine to tRNA(Val). As ValRS can inadvertently accommodate and process structurally similar amino acids such as threonine, to avoid such errors, it has a 'posttransfer' editing activity that hydrolyzes mischarged Thr-tRNA(Val) in a tRNA-dependent manner. The sequence is that of Valine--tRNA ligase from Chlamydia muridarum (strain MoPn / Nigg).